Here is a 483-residue protein sequence, read N- to C-terminus: Glutamate--tRNA ligase (483 aa).

Positions 11-21 (PSPTGLLHIGN) match the 'HIGH' region motif. A 'KMSKS' region motif is present at residues 255-259 (KLSKR). Lysine 258 contributes to the ATP binding site.

The protein belongs to the class-I aminoacyl-tRNA synthetase family. Glutamate--tRNA ligase type 1 subfamily. Monomer.

Its subcellular location is the cytoplasm. It catalyses the reaction tRNA(Glu) + L-glutamate + ATP = L-glutamyl-tRNA(Glu) + AMP + diphosphate. Functionally, catalyzes the attachment of glutamate to tRNA(Glu) in a two-step reaction: glutamate is first activated by ATP to form Glu-AMP and then transferred to the acceptor end of tRNA(Glu). The protein is Glutamate--tRNA ligase of Lactococcus lactis subsp. cremoris (strain MG1363).